Reading from the N-terminus, the 440-residue chain is Xylose isomerase (440 aa).

Residues H100 and D103 contribute to the active site. Positions 231, 267, 270, 295, 306, 308, and 338 each coordinate Mg(2+).

It belongs to the xylose isomerase family. As to quaternary structure, homotetramer. Requires Mg(2+) as cofactor.

It is found in the cytoplasm. It catalyses the reaction alpha-D-xylose = alpha-D-xylulofuranose. In Burkholderia cenocepacia (strain ATCC BAA-245 / DSM 16553 / LMG 16656 / NCTC 13227 / J2315 / CF5610) (Burkholderia cepacia (strain J2315)), this protein is Xylose isomerase.